Here is a 165-residue protein sequence, read N- to C-terminus: Bark lectin isoform 1 (165 aa).

Residues Asn-27 and Asn-57 are each glycosylated (N-linked (GlcNAc...) asparagine). 2 disulfide bridges follow: Cys-33/Cys-80 and Cys-126/Cys-133.

It belongs to the protease inhibitor I3 (leguminous Kunitz-type inhibitor) family. As to quaternary structure, dimer.

Functionally, glucose and N-acetylglucosamine binding lectin. Has hemagglutinating activity against human and rabbit erythrocytes which does not require divalent cations. Inhibits factor Xa and, to a lesser extent, trypsin. Does not inhibit neutrophil elastase, human plasma kallikrein, papain, human plasmin, porcine pancreatic kallikrein and bovin chymotrypsin. Has insecticidal activity against the termite species N.corniger. Induces apoptosis in prostrate cancer cell lines DU145 and PC3. This chain is Bark lectin isoform 1, found in Crateva tapia (Garlic-pear tree).